The chain runs to 354 residues: Uroporphyrinogen decarboxylase (354 aa).

Residues 27 to 31 (RQAGR), Asp-77, Tyr-154, Thr-209, and His-327 contribute to the substrate site.

Belongs to the uroporphyrinogen decarboxylase family. As to quaternary structure, homodimer.

It is found in the cytoplasm. It carries out the reaction uroporphyrinogen III + 4 H(+) = coproporphyrinogen III + 4 CO2. It functions in the pathway porphyrin-containing compound metabolism; protoporphyrin-IX biosynthesis; coproporphyrinogen-III from 5-aminolevulinate: step 4/4. Its function is as follows. Catalyzes the decarboxylation of four acetate groups of uroporphyrinogen-III to yield coproporphyrinogen-III. The chain is Uroporphyrinogen decarboxylase from Escherichia fergusonii (strain ATCC 35469 / DSM 13698 / CCUG 18766 / IAM 14443 / JCM 21226 / LMG 7866 / NBRC 102419 / NCTC 12128 / CDC 0568-73).